We begin with the raw amino-acid sequence, 79 residues long: RNA-binding protein Hfq (79 aa).

In terms of domain architecture, Sm spans 10 to 69 (DPFLNALRKEHVPVSIYLVNGIKLQGNIESFDQYVVLLRNTVTQMVYKHAISTVVPARPV).

The protein belongs to the Hfq family. In terms of assembly, homohexamer.

Its function is as follows. RNA chaperone that binds small regulatory RNA (sRNAs) and mRNAs to facilitate mRNA translational regulation in response to envelope stress, environmental stress and changes in metabolite concentrations. Also binds with high specificity to tRNAs. The chain is RNA-binding protein Hfq from Burkholderia mallei (strain ATCC 23344).